The sequence spans 515 residues: Fatty acyl-CoA reductase 1 (515 aa).

Topologically, residues 1–465 are cytoplasmic; it reads MVSIPEYYEG…ARKHLNKLRN (465 aa). A necessary and sufficient for PEX19-mediated localization into peroxisome membrane region spans residues 451–507; the sequence is SGLPAARKHLNKLRNIRYGFNTILVILIWRIFIARSQMARNIWYFVVSLCYKFLSYF. The chain crosses the membrane as a helical span at residues 466 to 483; that stretch reads IRYGFNTILVILIWRIFI. Over 484 to 515 the chain is Peroxisomal; sequence ARSQMARNIWYFVVSLCYKFLSYFRASSTMRY.

Belongs to the fatty acyl-CoA reductase family. Interacts with PEX19; PEX19 mediates the targeting of FAR1 to peroxisomes. As to expression, widely expressed. Expressed in all tissues examined. Highest expression seen in preputial gland. Expressed in the brain where large quantities of ether lipids are synthesized.

Its subcellular location is the peroxisome membrane. It carries out the reaction a long-chain fatty acyl-CoA + 2 NADPH + 2 H(+) = a long-chain primary fatty alcohol + 2 NADP(+) + CoA. The catalysed reaction is hexadecanoyl-CoA + 2 NADPH + 2 H(+) = hexadecan-1-ol + 2 NADP(+) + CoA. It catalyses the reaction octadecanoyl-CoA + 2 NADPH + 2 H(+) = octadecan-1-ol + 2 NADP(+) + CoA. The enzyme catalyses (9Z)-octadecenoyl-CoA + 2 NADPH + 2 H(+) = (9Z)-octadecen-1-ol + 2 NADP(+) + CoA. It carries out the reaction (9Z,12Z)-octadecadienoyl-CoA + 2 NADPH + 2 H(+) = (9Z,12Z)-octadecadien-1-ol + 2 NADP(+) + CoA. The catalysed reaction is eicosanoyl-CoA + 2 NADPH + 2 H(+) = eicosan-1-ol + 2 NADP(+) + CoA. It catalyses the reaction 16-methylheptadecanoyl-CoA + 2 NADPH + 2 H(+) = 16-methylheptadecan-1-ol + 2 NADP(+) + CoA. The enzyme catalyses 18-methylnonadecanoyl-CoA + 2 NADPH + 2 H(+) = 18-methylnonadecan-1-ol + 2 NADP(+) + CoA. Its function is as follows. Catalyzes the reduction of saturated and unsaturated C16 or C18 fatty acyl-CoA to fatty alcohols. It plays an essential role in the production of ether lipids/plasmalogens which synthesis requires fatty alcohols. In parallel, it is also required for wax monoesters production since fatty alcohols also constitute a substrate for their synthesis. This Mus musculus (Mouse) protein is Fatty acyl-CoA reductase 1.